The following is a 251-amino-acid chain: 3-deoxy-manno-octulosonate cytidylyltransferase (251 aa).

Belongs to the KdsB family.

It is found in the cytoplasm. It catalyses the reaction 3-deoxy-alpha-D-manno-oct-2-ulosonate + CTP = CMP-3-deoxy-beta-D-manno-octulosonate + diphosphate. It functions in the pathway nucleotide-sugar biosynthesis; CMP-3-deoxy-D-manno-octulosonate biosynthesis; CMP-3-deoxy-D-manno-octulosonate from 3-deoxy-D-manno-octulosonate and CTP: step 1/1. The protein operates within bacterial outer membrane biogenesis; lipopolysaccharide biosynthesis. In terms of biological role, activates KDO (a required 8-carbon sugar) for incorporation into bacterial lipopolysaccharide in Gram-negative bacteria. The polypeptide is 3-deoxy-manno-octulosonate cytidylyltransferase (Rhizobium johnstonii (strain DSM 114642 / LMG 32736 / 3841) (Rhizobium leguminosarum bv. viciae)).